The sequence spans 559 residues: CTP synthase (559 aa).

The segment at 1–270 (MTKFVFVTGG…DGLICDKLRI (270 aa)) is amidoligase domain. Serine 13 serves as a coordination point for CTP. Serine 13 provides a ligand contact to UTP. Residues 14-19 (SLGKGI) and aspartate 71 each bind ATP. Positions 71 and 144 each coordinate Mg(2+). Residues 151–153 (DIE), 191–196 (KTKPTQ), and lysine 227 each bind CTP. UTP contacts are provided by residues 191 to 196 (KTKPTQ) and lysine 227. A Glutamine amidotransferase type-1 domain is found at 295–547 (SIAMVGKYVD…IKAALDHKAR (253 aa)). Glycine 356 provides a ligand contact to L-glutamine. The active-site Nucleophile; for glutamine hydrolysis is cysteine 383. L-glutamine contacts are provided by residues 384 to 387 (LGMQ), glutamate 407, and arginine 473. Active-site residues include histidine 520 and glutamate 522.

The protein belongs to the CTP synthase family. In terms of assembly, homotetramer.

It catalyses the reaction UTP + L-glutamine + ATP + H2O = CTP + L-glutamate + ADP + phosphate + 2 H(+). The catalysed reaction is L-glutamine + H2O = L-glutamate + NH4(+). It carries out the reaction UTP + NH4(+) + ATP = CTP + ADP + phosphate + 2 H(+). It functions in the pathway pyrimidine metabolism; CTP biosynthesis via de novo pathway; CTP from UDP: step 2/2. Allosterically activated by GTP, when glutamine is the substrate; GTP has no effect on the reaction when ammonia is the substrate. The allosteric effector GTP functions by stabilizing the protein conformation that binds the tetrahedral intermediate(s) formed during glutamine hydrolysis. Inhibited by the product CTP, via allosteric rather than competitive inhibition. Functionally, catalyzes the ATP-dependent amination of UTP to CTP with either L-glutamine or ammonia as the source of nitrogen. Regulates intracellular CTP levels through interactions with the four ribonucleotide triphosphates. This is CTP synthase from Variovorax paradoxus (strain S110).